Consider the following 130-residue polypeptide: Holin-like protein CidA (130 aa).

Helical transmembrane passes span 6–26, 31–51, 65–85, and 93–113; these read FVIKLILQLALIMLITFIGTE, LHIPLAGSIVGLMLFFLLLQF, FLLKTMVFFFIPSVVGIMDVA, and ILFFIVIIIGTCLVALSSGYI.

It belongs to the CidA/LrgA family. CidA subfamily.

The protein resides in the cell membrane. Its function is as follows. Increases the activity of extracellular murein hydrolases possibly by mediating their export via hole formation. Inhibited by the antiholin-like proteins LrgAB. In an unstressed cell, the LrgAB products probably inhibit the function of the CidAB proteins. When a cell is stressed by the addition of antibiotics or by other factors in the environment, the CidAB proteins possibly oligomerize within the bacterial cell membrane, creating lesions that disrupt the proton motive force, which in turn results in loss of cell viability. These lesions are also hypothesized to regulate the subsequent cell lysis by either allowing the murein hydrolases access to the cell wall substrate and/or regulating their activity by a possible change in the cell wall pH that results from loss of membrane potential. The polypeptide is Holin-like protein CidA (Staphylococcus epidermidis (strain ATCC 35984 / DSM 28319 / BCRC 17069 / CCUG 31568 / BM 3577 / RP62A)).